The chain runs to 116 residues: Flagellar transcriptional regulator FlhD (116 aa).

Belongs to the FlhD family. In terms of assembly, homodimer; disulfide-linked. Forms a heterohexamer composed of two FlhC and four FlhD subunits. Each FlhC binds a FlhD dimer, forming a heterotrimer, and a hexamer assembles by dimerization of two heterotrimers.

The protein localises to the cytoplasm. Functions in complex with FlhC as a master transcriptional regulator that regulates transcription of several flagellar and non-flagellar operons by binding to their promoter region. Activates expression of class 2 flagellar genes, including fliA, which is a flagellum-specific sigma factor that turns on the class 3 genes. Also regulates genes whose products function in a variety of physiological pathways. The chain is Flagellar transcriptional regulator FlhD from Yersinia pseudotuberculosis serotype O:1b (strain IP 31758).